Consider the following 201-residue polypeptide: DeSI-like protein sdu1 (201 aa).

Residues 1 to 143 enclose the PPPDE domain; sequence MKVYINVYDL…AFPTITNALL (143 aa). Catalysis depends on residues histidine 29 and cysteine 105. Positions 146–201 are disordered; it reads GQKNTSDVDDSSDSSSDVDEETLIVSKSKKAHKDIPKFSAPPPSADLNNLITDSLP. A compositionally biased stretch (acidic residues) spans 152–167; it reads DVDDSSDSSSDVDEET. Polar residues predominate over residues 191-201; the sequence is DLNNLITDSLP.

This sequence belongs to the DeSI family.

Its subcellular location is the cytoplasm. In terms of biological role, has a role in meiosis. The polypeptide is DeSI-like protein sdu1 (sdu1) (Schizosaccharomyces pombe (strain 972 / ATCC 24843) (Fission yeast)).